A 97-amino-acid chain; its full sequence is NADH-ubiquinone oxidoreductase chain 4L (97 aa).

A run of 3 helical transmembrane segments spans residues 1-21 (MSYLILSIVILLIGILGIILN), 25-45 (LIIMLMCVELVLLASTILLLF), and 57-77 (IFAIVILTVAAAESAIGLAIM).

The protein belongs to the complex I subunit 4L family.

The protein localises to the mitochondrion membrane. It catalyses the reaction a ubiquinone + NADH + 5 H(+)(in) = a ubiquinol + NAD(+) + 4 H(+)(out). Core subunit of the mitochondrial membrane respiratory chain NADH dehydrogenase (Complex I) that is believed to belong to the minimal assembly required for catalysis. Complex I functions in the transfer of electrons from NADH to the respiratory chain. The immediate electron acceptor for the enzyme is believed to be ubiquinone. This is NADH-ubiquinone oxidoreductase chain 4L (ND4L) from Sarcophyton glaucum (Toadstool umbrella leather coral).